The following is a 211-amino-acid chain: Small ribosomal subunit protein uS3 (211 aa).

Residues 39-107 enclose the KH type-2 domain; sequence VTKYVESSFA…VPSLNVVEVK (69 aa).

This sequence belongs to the universal ribosomal protein uS3 family. In terms of assembly, part of the 30S ribosomal subunit. Forms a tight complex with proteins S10 and S14.

Functionally, binds the lower part of the 30S subunit head. Binds mRNA in the 70S ribosome, positioning it for translation. This chain is Small ribosomal subunit protein uS3, found in Neorickettsia sennetsu (strain ATCC VR-367 / Miyayama) (Ehrlichia sennetsu).